The primary structure comprises 396 residues: MSVRLVLAKGREKSLLRRHPWVFSGAVARMEGKASLGETIDIVDHQGKWLARGAYSPASQIRARVWTFDPSESIDIAFFSRRLQQAQKWRDWLAQKDGLDSYRLIAGESDGLPGITIDRFGNFLVLQLLSAGAEYQRAALITALQTLYPECAIYDRSDVAVRKKEGMELTHGLLTGELPPALLPIEEHGMNLLVDIHHGHKTAYYLDQRDSRLATRRYVENKRVLNCFSYTGGFAVSALMGGCSQVVSVDTSQEALDIARQNVELNKLDLSKAEFVRDDVFKLLRTYRDRGEKFDVIVMDPPKFVENKSQLMGACRGYKDINMLAIQLLNEGGILLTFSCSGLMTSDLFQKIIADAAIDAGRDVQFIEQFRQAADHPVIATYPEGLYLKGFACRVM.

The PUA domain maps to 2 to 81; the sequence is SVRLVLAKGR…ESIDIAFFSR (80 aa).

It belongs to the methyltransferase superfamily. RlmI family.

The protein localises to the cytoplasm. The enzyme catalyses cytidine(1962) in 23S rRNA + S-adenosyl-L-methionine = 5-methylcytidine(1962) in 23S rRNA + S-adenosyl-L-homocysteine + H(+). Its function is as follows. Specifically methylates the cytosine at position 1962 (m5C1962) of 23S rRNA. This is Ribosomal RNA large subunit methyltransferase I from Shigella flexneri.